The chain runs to 87 residues: Small ribosomal subunit protein bS20 (87 aa).

Over residues 1–11 the composition is skewed to basic residues; the sequence is MANIKSAKKRA. A disordered region spans residues 1-26; sequence MANIKSAKKRAVQSEKRRQHNASQRS.

Belongs to the bacterial ribosomal protein bS20 family.

In terms of biological role, binds directly to 16S ribosomal RNA. The sequence is that of Small ribosomal subunit protein bS20 from Actinobacillus pleuropneumoniae serotype 5b (strain L20).